An 842-amino-acid chain; its full sequence is Elongation factor 2 (842 aa).

The tr-type G domain occupies 17–253 (TNVRNMSVIA…LWGDSYFNPK (237 aa)). Residues 26–33 (AHVDHGKS), 158–161 (NKVD), and 213–215 (SGL) contribute to the GTP site. At histidine 699 the chain carries Diphthamide.

This sequence belongs to the TRAFAC class translation factor GTPase superfamily. Classic translation factor GTPase family. EF-G/EF-2 subfamily.

The protein resides in the cytoplasm. It carries out the reaction GTP + H2O = GDP + phosphate + H(+). Catalyzes the GTP-dependent ribosomal translocation step during translation elongation. During this step, the ribosome changes from the pre-translocational (PRE) to the post-translocational (POST) state as the newly formed A-site-bound peptidyl-tRNA and P-site-bound deacylated tRNA move to the P and E sites, respectively. Catalyzes the coordinated movement of the two tRNA molecules, the mRNA and conformational changes in the ribosome. The chain is Elongation factor 2 (EFT1) from Debaryomyces hansenii (strain ATCC 36239 / CBS 767 / BCRC 21394 / JCM 1990 / NBRC 0083 / IGC 2968) (Yeast).